The following is a 75-amino-acid chain: Tautomerase PptA (75 aa).

Pro2 (proton acceptor; via imino nitrogen) is an active-site residue.

This sequence belongs to the 4-oxalocrotonate tautomerase family. PptA subfamily. In terms of assembly, homodimer.

The protein localises to the cytoplasm. This is Tautomerase PptA from Klebsiella pneumoniae subsp. pneumoniae (strain ATCC 700721 / MGH 78578).